The sequence spans 210 residues: Glutathione S-transferase 3 (210 aa).

Positions 1–80 constitute a GST N-terminal domain; that stretch reads MDFYYLPLSA…YLVEKYGKQN (80 aa). Glutathione is bound by residues serine 9, 50 to 52, and 64 to 66; these read HTI and ESR. Positions 87 to 208 constitute a GST C-terminal domain; the sequence is CPKKRALINQ…AGCLEMKKYF (122 aa).

Belongs to the GST superfamily. Theta family. Homodimer.

The catalysed reaction is RX + glutathione = an S-substituted glutathione + a halide anion + H(+). In terms of biological role, conjugation of reduced glutathione to a wide number of exogenous and endogenous hydrophobic electrophiles. The protein is Glutathione S-transferase 3 (Gst3) of Musca domestica (House fly).